The chain runs to 309 residues: Olfactory receptor 1A1 (309 aa).

At 1–25 (MRENNQSSTLEFILLGVTGQQEQED) the chain is on the extracellular side. N-linked (GlcNAc...) asparagine glycosylation is present at Asn-5. The chain crosses the membrane as a helical span at residues 26 to 49 (FFYILFLFIYPITLIGNLLIVLAI). Topologically, residues 50 to 57 (CSDVHLHN) are cytoplasmic. Residues 58–79 (PMYFLLANLSLVDIFFSSVTIP) traverse the membrane as a helical segment. Over 80–100 (KMLANHLLGSKSISFGGCLTQ) the chain is Extracellular. A disulfide bridge links Cys-97 with Cys-189. A helical membrane pass occupies residues 101-120 (MYFMIALGNTDSYILAAMAY). Over 121 to 139 (DRAVAISRPLHYTTIMSPR) the chain is Cytoplasmic. Residues 140–158 (SCIWLIAGSWVIGNANALP) form a helical membrane-spanning segment. The Extracellular segment spans residues 159–195 (HTLLTASLSFCGNQEVANFYCDITPLLKLSCSDIHFH). Residues 196–218 (VKMMYLGVGIFSVPLLCIIVSYI) traverse the membrane as a helical segment. Residues 219–235 (RVFSTVFQVPSTKGVLK) lie on the Cytoplasmic side of the membrane. A helical transmembrane segment spans residues 236–258 (AFSTCGSHLTVVSLYYGTVMGMY). Topologically, residues 259–270 (FRPLTNYSLKDA) are extracellular. A glycan (N-linked (GlcNAc...) asparagine) is linked at Asn-264. The helical transmembrane segment at 271-290 (VITVMYTAVTPMLNPFIYSL) threads the bilayer. Topologically, residues 291–309 (RNRDVKAALRKLFNKRISS) are cytoplasmic.

Belongs to the G-protein coupled receptor 1 family.

The protein resides in the cell membrane. Functionally, odorant receptor. This Pan troglodytes (Chimpanzee) protein is Olfactory receptor 1A1 (OR1A1).